Reading from the N-terminus, the 367-residue chain is 3-isopropylmalate dehydrogenase (367 aa).

NAD(+) is bound at residue 75–88 (GPKWDGIERSKRPE). R95, R105, R133, and D230 together coordinate substrate. D230, D254, and D258 together coordinate Mg(2+). 288 to 300 (GSAPDIAGQDIAN) is an NAD(+) binding site.

It belongs to the isocitrate and isopropylmalate dehydrogenases family. LeuB type 1 subfamily. As to quaternary structure, homodimer. Mg(2+) serves as cofactor. Requires Mn(2+) as cofactor.

It localises to the cytoplasm. The catalysed reaction is (2R,3S)-3-isopropylmalate + NAD(+) = 4-methyl-2-oxopentanoate + CO2 + NADH. It functions in the pathway amino-acid biosynthesis; L-leucine biosynthesis; L-leucine from 3-methyl-2-oxobutanoate: step 3/4. In terms of biological role, catalyzes the oxidation of 3-carboxy-2-hydroxy-4-methylpentanoate (3-isopropylmalate) to 3-carboxy-4-methyl-2-oxopentanoate. The product decarboxylates to 4-methyl-2 oxopentanoate. The chain is 3-isopropylmalate dehydrogenase from Psychrobacter arcticus (strain DSM 17307 / VKM B-2377 / 273-4).